We begin with the raw amino-acid sequence, 496 residues long: Aldehyde dehydrogenase (496 aa).

Active-site residues include glutamate 263 and cysteine 296.

Belongs to the aldehyde dehydrogenase family.

The protein localises to the cytoplasm. It catalyses the reaction an aldehyde + NAD(+) + H2O = a carboxylate + NADH + 2 H(+). The sequence is that of Aldehyde dehydrogenase (CLAH10) from Davidiella tassiana (Mycosphaerella tassiana).